The following is a 444-amino-acid chain: Acyl-CoA 6-desaturase (444 aa).

The Cytoplasmic portion of the chain corresponds to 1–122 (MGKGGNQDEG…FRALRKTAED (122 aa)). In terms of domain architecture, Cytochrome b5 heme-binding spans 18-95 (MPTFRWEEIQ…MKPLLIGELA (78 aa)). The helical transmembrane segment at 123 to 143 (MNLFKSNQLFFLLHLAHIIAM) threads the bilayer. Residues 144–147 (ESIA) are Lumenal-facing. The chain crosses the membrane as a helical span at residues 148 to 168 (WFTLFYFGNGWIPTIITAFVL). Residues 169–264 (ATSQAQAGWL…KYLPYNHQHE (96 aa)) lie on the Cytoplasmic side of the membrane. The Histidine box-1 signature appears at 180–184 (HDYGH). Positions 217-221 (HFQHH) match the Histidine box-2 motif. A helical membrane pass occupies residues 265–285 (YFFLIGPPLLIPLYFQYQIIM). Residues 286 to 305 (TMIVRKYWADLAWAISYYTR) lie on the Lumenal side of the membrane. The helical transmembrane segment at 306-326 (FFITYIPFYGVLGSILFLNFI) threads the bilayer. Residues 327-444 (RFLESHWFVW…QLWLDAYLHK (118 aa)) lie on the Cytoplasmic side of the membrane. Positions 382–386 (QIEHH) match the Histidine box-3 motif.

This sequence belongs to the fatty acid desaturase type 1 family.

The protein resides in the endoplasmic reticulum membrane. It catalyses the reaction (9Z,12Z)-octadecadienoyl-CoA + 2 Fe(II)-[cytochrome b5] + O2 + 2 H(+) = (6Z,9Z,12Z)-octadecatrienoyl-CoA + 2 Fe(III)-[cytochrome b5] + 2 H2O. The catalysed reaction is (9Z,12Z,15Z)-octadecatrienoyl-CoA + 2 Fe(II)-[cytochrome b5] + O2 + 2 H(+) = (6Z,9Z,12Z,15Z)-octadecatetraenoyl-CoA + 2 Fe(III)-[cytochrome b5] + 2 H2O. The enzyme catalyses (9Z,12Z,15Z,18Z,21Z)-tetracosapentaenoyl-CoA + 2 Fe(II)-[cytochrome b5] + O2 + 2 H(+) = (6Z,9Z,12Z,15Z,18Z,21Z)-tetracosahexaenoyl-CoA + 2 Fe(III)-[cytochrome b5] + 2 H2O. It carries out the reaction (11E)-octadecenoyl-CoA + 2 Fe(II)-[cytochrome b5] + O2 + 2 H(+) = (6Z,11E)-octadecadienoyl-CoA + 2 Fe(III)-[cytochrome b5] + 2 H2O. It catalyses the reaction (11Z,14Z)-eicosadienoyl-CoA + 2 Fe(II)-[cytochrome b5] + O2 + 2 H(+) = (8Z,11Z,14Z)-eicosatrienoyl-CoA + 2 Fe(III)-[cytochrome b5] + 2 H2O. The catalysed reaction is (11Z,14Z,17Z)-eicosatrienoyl-CoA + 2 Fe(II)-[cytochrome b5] + O2 + 2 H(+) = (8Z,11Z,14Z,17Z)-eicosatetraenoyl-CoA + 2 Fe(III)-[cytochrome b5] + 2 H2O. It functions in the pathway lipid metabolism; polyunsaturated fatty acid biosynthesis. Involved in the biosynthesis of highly unsaturated fatty acids (HUFA) from the essential polyunsaturated fatty acids (PUFA) linoleic acid (LA) (18:2n-6) and alpha-linolenic acid (ALA) (18:3n-3) precursors, acting as a fatty acyl-coenzyme A (CoA) desaturase that introduces a cis double bond at carbon 6 of the fatty acyl chain. Catalyzes the first and rate limiting step in this pathway which is the desaturation of LA (18:2n-6) and ALA (18:3n-3) into gamma-linoleate (GLA) (18:3n-6) and stearidonate (18:4n-3), respectively. Subsequently, in the biosynthetic pathway of HUFA n-3 series, it desaturates tetracosapentaenoate (24:5n-3) to tetracosahexaenoate (24:6n-3), which is then converted to docosahexaenoate (DHA)(22:6n-3), an important lipid for nervous system function. It can also desaturate (11E)-octadecenoate (trans-vaccenoate, a metabolite in the biohydrogenation pathway of LA and the predominant trans fatty acid in cow milk) at carbon 6 generating (6Z,11E)-octadecadienoate. In addition to Delta-6 activity, this enzyme exhibits Delta-8 activity with slight biases toward n-3 fatty acyl-CoA substrates. The sequence is that of Acyl-CoA 6-desaturase (FADS2) from Bos taurus (Bovine).